Here is a 105-residue protein sequence, read N- to C-terminus: VQVISSYDQFKQVTGGDKVVVIDFWATWCGPCKMIGPVFEKISDTPAGDKVGFYKVDVDEQSQIAQEVGIRAMPTFVFFKNGQKIDTVVGADPSKLQAAITQHSA.

Positions Val1–Ala105 constitute a Thioredoxin domain. Catalysis depends on nucleophile residues Cys29 and Cys32. Cys29 and Cys32 are disulfide-bonded.

It belongs to the thioredoxin family. Monomer.

Its function is as follows. Participates in various redox reactions through the reversible oxidation of its active center dithiol to a disulfide and catalyzes dithiol-disulfide exchange reactions. This chain is Thioredoxin, found in Malassezia sympodialis (Atopic eczema-associated yeast).